Consider the following 88-residue polypeptide: Co-chaperonin GroES (88 aa).

This sequence belongs to the GroES chaperonin family. In terms of assembly, heptamer of 7 subunits arranged in a ring. Interacts with the chaperonin GroEL.

The protein resides in the cytoplasm. Its function is as follows. Together with the chaperonin GroEL, plays an essential role in assisting protein folding. The GroEL-GroES system forms a nano-cage that allows encapsulation of the non-native substrate proteins and provides a physical environment optimized to promote and accelerate protein folding. GroES binds to the apical surface of the GroEL ring, thereby capping the opening of the GroEL channel. This chain is Co-chaperonin GroES, found in Treponema denticola (strain ATCC 35405 / DSM 14222 / CIP 103919 / JCM 8153 / KCTC 15104).